A 380-amino-acid chain; its full sequence is Actinidain (380 aa).

An N-terminal signal peptide occupies residues 1-24 (MGLPKSFVSMSLLFFSTLLILSLA). Residues 25–126 (FNAKNLTQRT…NQYEPRVGQV (102 aa)) constitute a propeptide, activation peptide. Intrachain disulfides connect cysteine 148–cysteine 191, cysteine 182–cysteine 224, and cysteine 282–cysteine 332. Cysteine 151 is a catalytic residue. Cysteine 151 serves as a coordination point for E64. Catalysis depends on residues histidine 288 and asparagine 308.

It belongs to the peptidase C1 family. As to expression, fruit.

The catalysed reaction is Specificity close to that of papain.. Repressed by the active-site-directed cysteine protease inhibitor E64 (L-trans-epoxysuccinyl-leucylamide-(4-guanido)-butane) produced by Aspergillus japonicus. Functionally, cysteine protease responsible for the cleavage of kiwellin into kissper and KiTH. The sequence is that of Actinidain from Actinidia chinensis var. chinensis (Chinese soft-hair kiwi).